The sequence spans 130 residues: Small ribosomal subunit protein uS11 (130 aa).

It belongs to the universal ribosomal protein uS11 family. As to quaternary structure, part of the 30S ribosomal subunit. Interacts with proteins S7 and S18. Binds to IF-3.

Functionally, located on the platform of the 30S subunit, it bridges several disparate RNA helices of the 16S rRNA. Forms part of the Shine-Dalgarno cleft in the 70S ribosome. This is Small ribosomal subunit protein uS11 from Shewanella violacea (strain JCM 10179 / CIP 106290 / LMG 19151 / DSS12).